The chain runs to 398 residues: Chalcone synthase 1 (398 aa).

Residue Cys-167 is part of the active site.

Belongs to the thiolase-like superfamily. Chalcone/stilbene synthases family.

The enzyme catalyses (E)-4-coumaroyl-CoA + 3 malonyl-CoA + 3 H(+) = 2',4,4',6'-tetrahydroxychalcone + 3 CO2 + 4 CoA. Its pathway is secondary metabolite biosynthesis; flavonoid biosynthesis. Functionally, the primary product of this enzyme is 4,2',4',6'-tetrahydroxychalcone (also termed naringenin-chalcone or chalcone) which can under specific conditions spontaneously isomerize into naringenin. The chain is Chalcone synthase 1 (CHS1) from Gerbera hybrida (Daisy).